The following is a 269-amino-acid chain: Cyclic AMP-dependent transcription factor ATF-1 (269 aa).

A disordered region spans residues 1–90 (MEDSHKSNTT…GEGENPSISA (90 aa)). Polar residues predominate over residues 9–18 (TTETASQPGS). The KID domain maps to 31-90 (QVSSLSESEESQDSSDSIGSSQKAHGILARRPSYRKILKDLSSEDTRGRKGEGENPSISA). Ser63 is subject to Phosphoserine; by CaMK1, CDK3, RPS6KA4 and RPS6KA5. A compositionally biased stretch (basic and acidic residues) spans 67 to 83 (ILKDLSSEDTRGRKGEG). Ser196 carries the post-translational modification Phosphoserine; by HIPK2. Residue Lys206 forms a Glycyl lysine isopeptide (Lys-Gly) (interchain with G-Cter in SUMO2) linkage. Residues 211–269 (QLRREIRLMKNREAARECRRKKKEYVKCLENRVAVLENQNKTLIEELKTLKDLYSHKSV) form the bZIP domain. Residues 213–237 (RREIRLMKNREAARECRRKKKEYVK) are basic motif. The interval 239–260 (LENRVAVLENQNKTLIEELKTL) is leucine-zipper.

It belongs to the bZIP family. ATF subfamily. In terms of assembly, binds DNA as a dimer. Interacts with HIPK2 and CDK3. Interacts with MOTS-c, a peptide produced by the mitochondrially encoded 12S rRNA MT-RNR1; the interaction occurs in the nucleus following metabolic stress. In terms of processing, phosphorylated at Ser-196 by HIPK2 in response to genotoxic stress. This phosphorylation promotes transcription repression of FTH1 and other antioxidant detoxification genes. The CDK3-mediated phosphorylation at Ser-63 promotes its transactivation and transcriptional activities. Phosphorylated at Ser-63 by RPS6KA4 and RPS6KA5 in response to mitogenic or stress stimuli.

Its subcellular location is the nucleus. Its function is as follows. Binds the cAMP response element (CRE) (consensus: 5'-GTGACGT[AC][AG]-3'), a sequence present in many viral and cellular promoters. Binds to the Tax-responsive element (TRE) of HTLV-I. Mediates PKA-induced stimulation of CRE-reporter genes. Represses the expression of FTH1 and other antioxidant detoxification genes. Triggers cell proliferation and transformation. This chain is Cyclic AMP-dependent transcription factor ATF-1 (Atf1), found in Mus musculus (Mouse).